The following is a 340-amino-acid chain: Ava biosynthesis cluster protein G (340 aa).

Transmembrane regions (helical) follow at residues Trp15 to Asn35, Phe81 to Val101, Ala118 to Phe138, and Leu148 to Ile168. N-linked (GlcNAc...) asparagine glycosylation is present at Asn171. 2 consecutive transmembrane segments (helical) span residues Phe219 to Phe239 and Ser315 to Ile335.

It is found in the membrane. It participates in secondary metabolite biosynthesis. Part of the cluster that mediates the biosynthesis of a highly modified cyclo-arginine-tryptophan dipeptide (cRW). The first step of the pathway is perfornmed by the arginine-containing cyclodipeptide synthase (RCPDS) avaA that acts as the scaffold-generating enzyme and is responsible for formation of the cyclo-Arg-Trp (cRW) diketopiperazine. AvaB then acts as a multifunctional flavoenzyme that is responsible for generating the cyclo-Arg-formylkynurenine DKP, which can be deformylated by avaC. AvaB then further catalyzes an additional N-oxidation followed by cyclization and dehydration. The next step is an N-acetylation of the guanidine group catalyzed by the arginine N-acetyltransferase avaD. The roles of the additional enzymes identified within the ava cluster still have to be determined. This Aspergillus versicolor protein is Ava biosynthesis cluster protein G.